The primary structure comprises 1188 residues: MLIIQNTKGDSMKFIAWLDELSNKDVDIAGGKGASLGEMWNAGLPVPPAFVVTADAYRHFIKETGLMDKIREILSGLDVNDTDALTNASKKIRKLIEEAEMPEDLRLAIIEAYNKLCEMCGEDEVTVAVRSSATAEDLPEASFAGQQDTYLNIKGAENVVKYVQKCFSSLFTPRAIFYREQQGFDHFKVALAAVVQKLVNAEKAGVMFTVNPISENYDELVIEAAWGLGEGVVSGSVSPDTYIVNKKTLEIVDKHIARKETMFVKDEKGETKVVEVPDDMKEKQVLSDDEIKELAKIGLNIEKHYGKPMDVEWAYEKGKFYMLQARPITTLKKGKKEKKAKEEDIEAKILLKGIGASPGIATGVVKIIHDVSEIDKVKEGDILVTEMTTPDMVPAMKKAAAIVTDEGGLTCIEGDAKILTDRGFLKMKEVYKLVKNGEKLKVLGLNAETLKTEWKEIIDAQKREARRYEIGVYRKNKNTKDTIKITPDHKFPVFVNGELSKVQLCDIIDNNLSVLSIDYIPMIEEKYESLAEVMYLGGAVLSDGHIVRRNGKPIRVRFTQKDTEEKKDFIEKVKGDVKLIGGNFIEISNRNNVIEYQTSRKIPSEILGFIEVNINTIPLYATKDEIADLIAGFVDGDGCLSGKRRVEIYQNSSHIKKIEGLIVGLYRLGIIPRLRYKRSSTATIYFNNNLETILQRTRRIKLDKLKEFKKPVEDKKLIDISQILPELKEFDYKGYLYKTYKEKLFIGINKLEEYLSKIDKDGIERIKQKIKLLKESDIYSIRIKKVGEDYGEVYNITVKAENEFNHNYVVWTKHYTPIVVFNCHAAIVSRELGTPCVVGTKKATKVLKDGMIVTVDGEKGIVYEGEIKKVEEKEKKQEVVVQQAPIITATEVKVNVSMPEVAERAAATGADGVGLLRAEHMILGLGKHPRKILEEEGEEALIEALMEGIRKVADAFYPRPVTYRTLDAPTDEFRGLEGGENEPIEHNPMLGWRGIRRDLDEVDILKCELKAIKRLREEGYKNIEIMIPLVTHPDEVRRVKEIMREVGLEPCKDIPFGIMVETPAAALIIEDFIKEGINFVSLGTNDLTQYTIAIDRNNELVSKYYKEDHPAVLKLVEHVIKTCKKHGIKTSICGQAGSRPHIVEKLVEWGIDSVSANIDAVETIRRVVARTEQKVILNYIRKSYVERE.

One can recognise a DOD-type homing endonuclease domain in the interval 536–670 (LGGAVLSDGH…LIVGLYRLGI (135 aa)). The active-site Tele-phosphohistidine intermediate is His-824. Positions 917, 964, 1061, 1083, 1084, 1085, and 1086 each coordinate substrate. A Mg(2+)-binding site is contributed by Glu-1061. A Mg(2+)-binding site is contributed by Asp-1086. The active-site Proton donor is the Cys-1133.

Belongs to the PEP-utilizing enzyme family. Mg(2+) is required as a cofactor. Post-translationally, this protein undergoes a protein self splicing that involves a post-translational excision of the intervening region (intein) followed by peptide ligation.

It carries out the reaction pyruvate + ATP + H2O = phosphoenolpyruvate + AMP + phosphate + 2 H(+). Its pathway is carbohydrate biosynthesis; gluconeogenesis. Its function is as follows. Catalyzes the phosphorylation of pyruvate to phosphoenolpyruvate. The sequence is that of Probable phosphoenolpyruvate synthase (ppsA) from Methanocaldococcus jannaschii (strain ATCC 43067 / DSM 2661 / JAL-1 / JCM 10045 / NBRC 100440) (Methanococcus jannaschii).